Consider the following 369-residue polypeptide: uncharacterized protein (369 aa).

Disordered stretches follow at residues Met-1–Ser-42, Pro-60–Asp-107, Ala-146–Gly-177, and Leu-214–Asp-369. A compositionally biased stretch (polar residues) spans Val-12 to Asn-24. Composition is skewed to low complexity over residues Ser-30–Ser-42 and Tyr-70–Ser-86. The segment covering Ala-87–Asn-101 has biased composition (polar residues). A compositionally biased stretch (acidic residues) spans Asp-155–Gly-169. Residues Asn-219–Tyr-324 show a composition bias toward low complexity.

This is an uncharacterized protein from Dictyostelium discoideum (Social amoeba).